The chain runs to 39 residues: MAGTGRIPLWLVATVGGMAAITVLGIFIYGSYSGVGSSL.

A helical membrane pass occupies residues Leu9 to Tyr29.

This sequence belongs to the PsbJ family. In terms of assembly, PSII is composed of 1 copy each of membrane proteins PsbA, PsbB, PsbC, PsbD, PsbE, PsbF, PsbH, PsbI, PsbJ, PsbK, PsbL, PsbM, PsbT, PsbX, PsbY, PsbZ, Psb30/Ycf12, at least 3 peripheral proteins of the oxygen-evolving complex and a large number of cofactors. It forms dimeric complexes.

It is found in the plastid. The protein resides in the chloroplast thylakoid membrane. One of the components of the core complex of photosystem II (PSII). PSII is a light-driven water:plastoquinone oxidoreductase that uses light energy to abstract electrons from H(2)O, generating O(2) and a proton gradient subsequently used for ATP formation. It consists of a core antenna complex that captures photons, and an electron transfer chain that converts photonic excitation into a charge separation. This is Photosystem II reaction center protein J from Porphyra purpurea (Red seaweed).